Reading from the N-terminus, the 66-residue chain is Large ribosomal subunit protein uL29 (66 aa).

The protein belongs to the universal ribosomal protein uL29 family.

The sequence is that of Large ribosomal subunit protein uL29 from Geobacillus thermodenitrificans (strain NG80-2).